Here is a 165-residue protein sequence, read N- to C-terminus: Anaerobic nitrite reductase GLB1 (165 aa).

Residues 12–162 (VFGEEQEALV…LVAAIKREMK (151 aa)) enclose the Globin domain. A Homodimerization motif is present at residues 45–49 (EIAPS). Heme b-binding residues include serine 55, lysine 69, histidine 73, arginine 103, threonine 107, and histidine 108. Positions 115-127 (DGHFEVTGFALLE) match the Homodimerization motif.

It belongs to the plant globin family. In terms of assembly, homodimer. It depends on heme b as a cofactor. In embryonic organs and at low levels in vegetative organs.

The protein resides in the cytoplasm. It is found in the nucleus. The enzyme catalyses Fe(III)-heme b-[protein] + nitric oxide + H2O = Fe(II)-heme b-[protein] + nitrite + 2 H(+). Its function is as follows. Phytoglobin that reduces nitrite to nitric oxide (NO) under anoxic conditions (e.g. during flooding or in waterlogged soil). May not function as an oxygen storage or transport protein. Has an unusually high affinity for O(2) through an hexacoordinate heme iron because of a very low dissociation constant. The polypeptide is Anaerobic nitrite reductase GLB1 (HB) (Zea mays (Maize)).